The chain runs to 255 residues: Large ribosomal subunit protein uL4 (255 aa).

Belongs to the universal ribosomal protein uL4 family. As to quaternary structure, part of the 50S ribosomal subunit.

Its function is as follows. One of the primary rRNA binding proteins, this protein initially binds near the 5'-end of the 23S rRNA. It is important during the early stages of 50S assembly. It makes multiple contacts with different domains of the 23S rRNA in the assembled 50S subunit and ribosome. Forms part of the polypeptide exit tunnel. The protein is Large ribosomal subunit protein uL4 of Thermococcus kodakarensis (strain ATCC BAA-918 / JCM 12380 / KOD1) (Pyrococcus kodakaraensis (strain KOD1)).